A 258-amino-acid chain; its full sequence is Type III pantothenate kinase (258 aa).

12-19 (DIGNTSIA) provides a ligand contact to ATP. Substrate contacts are provided by residues Tyr-94 and 109 to 112 (GSDV). Asp-111 serves as the catalytic Proton acceptor. Residue Asp-132 participates in K(+) binding. Thr-135 contacts ATP. Thr-187 is a substrate binding site.

It belongs to the type III pantothenate kinase family. In terms of assembly, homodimer. Requires NH4(+) as cofactor. The cofactor is K(+).

The protein localises to the cytoplasm. It catalyses the reaction (R)-pantothenate + ATP = (R)-4'-phosphopantothenate + ADP + H(+). Its pathway is cofactor biosynthesis; coenzyme A biosynthesis; CoA from (R)-pantothenate: step 1/5. In terms of biological role, catalyzes the phosphorylation of pantothenate (Pan), the first step in CoA biosynthesis. The polypeptide is Type III pantothenate kinase (Borreliella afzelii (strain PKo) (Borrelia afzelii)).